The sequence spans 158 residues: Endoribonuclease YbeY (158 aa).

Residues histidine 114, histidine 118, and histidine 124 each coordinate Zn(2+).

The protein belongs to the endoribonuclease YbeY family. The cofactor is Zn(2+).

The protein localises to the cytoplasm. In terms of biological role, single strand-specific metallo-endoribonuclease involved in late-stage 70S ribosome quality control and in maturation of the 3' terminus of the 16S rRNA. The sequence is that of Endoribonuclease YbeY from Legionella pneumophila (strain Paris).